The primary structure comprises 198 residues: Endonuclease V (198 aa).

Positions 38 and 101 each coordinate Mg(2+).

Belongs to the endonuclease V family. Mg(2+) serves as cofactor.

It is found in the cytoplasm. The enzyme catalyses Endonucleolytic cleavage at apurinic or apyrimidinic sites to products with a 5'-phosphate.. Its function is as follows. DNA repair enzyme involved in the repair of deaminated bases. Selectively cleaves double-stranded DNA at the second phosphodiester bond 3' to a deoxyinosine leaving behind the intact lesion on the nicked DNA. In Saccharolobus islandicus (strain Y.N.15.51 / Yellowstone #2) (Sulfolobus islandicus), this protein is Endonuclease V.